The chain runs to 147 residues: uncharacterized protein (147 aa).

The protein belongs to the limonene-1,2-epoxide hydrolase family.

This is an uncharacterized protein from Bacillus subtilis (strain 168).